An 85-amino-acid polypeptide reads, in one-letter code: ATP synthase subunit c (85 aa).

Transmembrane regions (helical) follow at residues Ile10 to Leu30 and Phe53 to Phe73.

It belongs to the ATPase C chain family. F-type ATPases have 2 components, F(1) - the catalytic core - and F(0) - the membrane proton channel. F(1) has five subunits: alpha(3), beta(3), gamma(1), delta(1), epsilon(1). F(0) has three main subunits: a(1), b(2) and c(10-14). The alpha and beta chains form an alternating ring which encloses part of the gamma chain. F(1) is attached to F(0) by a central stalk formed by the gamma and epsilon chains, while a peripheral stalk is formed by the delta and b chains.

It is found in the cell inner membrane. Its function is as follows. F(1)F(0) ATP synthase produces ATP from ADP in the presence of a proton or sodium gradient. F-type ATPases consist of two structural domains, F(1) containing the extramembraneous catalytic core and F(0) containing the membrane proton channel, linked together by a central stalk and a peripheral stalk. During catalysis, ATP synthesis in the catalytic domain of F(1) is coupled via a rotary mechanism of the central stalk subunits to proton translocation. In terms of biological role, key component of the F(0) channel; it plays a direct role in translocation across the membrane. A homomeric c-ring of between 10-14 subunits forms the central stalk rotor element with the F(1) delta and epsilon subunits. The chain is ATP synthase subunit c from Pseudomonas aeruginosa (strain LESB58).